The following is a 108-amino-acid chain: Small ribosomal subunit protein eS25B (108 aa).

The span at 1–20 (MPPKQQLSKAAKAAAALAGG) shows a compositional bias: low complexity. A disordered region spans residues 1–30 (MPPKQQLSKAAKAAAALAGGKKSKKKWSKK). Pro2 bears the N,N-dimethylproline; by NTM1 mark. A compositionally biased stretch (basic residues) spans 21-30 (KKSKKKWSKK).

This sequence belongs to the eukaryotic ribosomal protein eS25 family. As to quaternary structure, component of the small ribosomal subunit (SSU). Mature yeast ribosomes consist of a small (40S) and a large (60S) subunit. The 40S small subunit contains 1 molecule of ribosomal RNA (18S rRNA) and 33 different proteins (encoded by 57 genes). The large 60S subunit contains 3 rRNA molecules (25S, 5.8S and 5S rRNA) and 46 different proteins (encoded by 81 genes).

It is found in the cytoplasm. Its function is as follows. Component of the ribosome, a large ribonucleoprotein complex responsible for the synthesis of proteins in the cell. The small ribosomal subunit (SSU) binds messenger RNAs (mRNAs) and translates the encoded message by selecting cognate aminoacyl-transfer RNA (tRNA) molecules. The large subunit (LSU) contains the ribosomal catalytic site termed the peptidyl transferase center (PTC), which catalyzes the formation of peptide bonds, thereby polymerizing the amino acids delivered by tRNAs into a polypeptide chain. The nascent polypeptides leave the ribosome through a tunnel in the LSU and interact with protein factors that function in enzymatic processing, targeting, and the membrane insertion of nascent chains at the exit of the ribosomal tunnel. This Saccharomyces cerevisiae (strain ATCC 204508 / S288c) (Baker's yeast) protein is Small ribosomal subunit protein eS25B.